A 434-amino-acid chain; its full sequence is uncharacterized protein (434 aa).

One can recognise a TRAM domain in the interval 4–62 (LLTIHTQVEGEITALAFGGAGILRYHGFVIFVPFTAPGDQIICRIIEIKKSFAVAELVK). [4Fe-4S] cluster contacts are provided by Cys-75, Cys-81, Cys-84, and Cys-161. S-adenosyl-L-methionine is bound by residues Gln-266, Tyr-295, Glu-316, and Asn-364. Residue Cys-391 is the Nucleophile of the active site.

It belongs to the class I-like SAM-binding methyltransferase superfamily. RNA M5U methyltransferase family.

This is an uncharacterized protein from Protochlamydia amoebophila (strain UWE25).